The chain runs to 410 residues: 3-phosphoshikimate 1-carboxyvinyltransferase (410 aa).

Residues lysine 20, serine 21, and arginine 25 each coordinate 3-phosphoshikimate. Position 20 (lysine 20) interacts with phosphoenolpyruvate. 2 residues coordinate phosphoenolpyruvate: glycine 87 and arginine 115. Residues serine 157, serine 158, glutamine 159, serine 183, aspartate 293, and lysine 320 each contribute to the 3-phosphoshikimate site. Glutamine 159 contacts phosphoenolpyruvate. Aspartate 293 functions as the Proton acceptor in the catalytic mechanism. Positions 324, 365, and 391 each coordinate phosphoenolpyruvate.

It belongs to the EPSP synthase family. As to quaternary structure, monomer.

The protein resides in the cytoplasm. The catalysed reaction is 3-phosphoshikimate + phosphoenolpyruvate = 5-O-(1-carboxyvinyl)-3-phosphoshikimate + phosphate. Its pathway is metabolic intermediate biosynthesis; chorismate biosynthesis. Catalyzes the transfer of the enolpyruvyl moiety of phosphoenolpyruvate (PEP) to the 5-hydroxyl of shikimate-3-phosphate (S3P) to produce enolpyruvyl shikimate-3-phosphate and inorganic phosphate. The sequence is that of 3-phosphoshikimate 1-carboxyvinyltransferase from Thermoplasma volcanium (strain ATCC 51530 / DSM 4299 / JCM 9571 / NBRC 15438 / GSS1).